An 88-amino-acid polypeptide reads, in one-letter code: UPF0335 protein Mnod_5968 (88 aa).

Belongs to the UPF0335 family.

This Methylobacterium nodulans (strain LMG 21967 / CNCM I-2342 / ORS 2060) protein is UPF0335 protein Mnod_5968.